Here is a 189-residue protein sequence, read N- to C-terminus: Protein GrpE (189 aa).

Over residues 1-38 (MTKSNETERMEESEETHSSDIRSASESDHASGSDHTES) the composition is skewed to basic and acidic residues. Residues 1–54 (MTKSNETERMEESEETHSSDIRSASESDHASGSDHTESADEIPTADAEQGELEQ) are disordered.

It belongs to the GrpE family. Homodimer.

Its subcellular location is the cytoplasm. Functionally, participates actively in the response to hyperosmotic and heat shock by preventing the aggregation of stress-denatured proteins, in association with DnaK and GrpE. It is the nucleotide exchange factor for DnaK and may function as a thermosensor. Unfolded proteins bind initially to DnaJ; upon interaction with the DnaJ-bound protein, DnaK hydrolyzes its bound ATP, resulting in the formation of a stable complex. GrpE releases ADP from DnaK; ATP binding to DnaK triggers the release of the substrate protein, thus completing the reaction cycle. Several rounds of ATP-dependent interactions between DnaJ, DnaK and GrpE are required for fully efficient folding. This chain is Protein GrpE, found in Tropheryma whipplei (strain Twist) (Whipple's bacillus).